The following is a 638-amino-acid chain: 1-deoxy-D-xylulose-5-phosphate synthase (638 aa).

Residues His-71 and 112–114 (SHA) contribute to the thiamine diphosphate site. A Mg(2+)-binding site is contributed by Asp-144. Thiamine diphosphate contacts are provided by residues 145-146 (GA), Asn-173, Tyr-284, and Glu-365. Mg(2+) is bound at residue Asn-173.

This sequence belongs to the transketolase family. DXPS subfamily. In terms of assembly, homodimer. Mg(2+) is required as a cofactor. The cofactor is thiamine diphosphate.

It carries out the reaction D-glyceraldehyde 3-phosphate + pyruvate + H(+) = 1-deoxy-D-xylulose 5-phosphate + CO2. It participates in metabolic intermediate biosynthesis; 1-deoxy-D-xylulose 5-phosphate biosynthesis; 1-deoxy-D-xylulose 5-phosphate from D-glyceraldehyde 3-phosphate and pyruvate: step 1/1. Functionally, catalyzes the acyloin condensation reaction between C atoms 2 and 3 of pyruvate and glyceraldehyde 3-phosphate to yield 1-deoxy-D-xylulose-5-phosphate (DXP). The chain is 1-deoxy-D-xylulose-5-phosphate synthase from Mycobacterium sp. (strain JLS).